The following is a 1481-amino-acid chain: Cystic fibrosis transmembrane conductance regulator (1481 aa).

At 1-77 (MQKSPLVKAS…KLINALRRCF (77 aa)) the chain is on the cytoplasmic side. The helical transmembrane segment at 78–98 (LWRFIFYGILLYLGEVTKAVQ) threads the bilayer. Positions 81–365 (FIFYGILLYL…GAVQTWYDSL (285 aa)) constitute an ABC transmembrane type-1 1 domain. Over 99–122 (PLLLGRIIASYDPDNKEERSIAIY) the chain is Extracellular. A helical membrane pass occupies residues 123–146 (LAIGLCLLFIVRTLLLHPAIFGLQ). The Cytoplasmic portion of the chain corresponds to 147-195 (HIGMQMRIAMFSLIYKKTLKLSSRVLDKISIGQLVSLLSNNLNKFDEGL). A helical transmembrane segment spans residues 196–216 (ALAHFVWIAPLQVTLLMGLLW). Over 217 to 222 (DLLQAS) the chain is Extracellular. Residues 223–243 (AFCGLAVLIVLALFQAWLGKM) form a helical membrane-spanning segment. The Cytoplasmic portion of the chain corresponds to 244-298 (MMKYRDQRAGKINERLVITSEMIENIQSVKAYCWEEAMEKMIENLRQTELKLTRK). Residues 299-319 (AAYMRYFNSAAFFFSGFFVVF) traverse the membrane as a helical segment. The Extracellular segment spans residues 320-339 (LSVLPYAFLQGIILRKIFTT). A helical transmembrane segment spans residues 340–358 (ISFCIVLRMAITRQFPGAV). Residues 359–859 (QTWYDSLGAI…YLRYITVHKS (501 aa)) are Cytoplasmic-facing. ATP is bound by residues Trp401, Ser435, 459–466 (GSTGAGKT), and Gln494. An ABC transporter 1 domain is found at 424–647 (NGDNKLFFSN…RPDFSSKLMG (224 aa)). A lipid anchor (S-palmitoyl cysteine) is attached at Cys525. Ser550 is modified (phosphoserine). The disordered R region stretch occupies residues 655–832 (SAERRNSILT…EEINEEDLKE (178 aa)). 2 positions are modified to phosphoserine; by PKA: Ser661 and Ser671. Residue Ser687 is modified to Phosphoserine; by PKC. Residue Lys689 forms a Glycyl lysine isopeptide (Lys-Gly) (interchain with G-Cter in ubiquitin) linkage. A phosphoserine; by PKA mark is found at Ser701 and Ser713. Thr718 carries the post-translational modification Phosphothreonine. Residues Ser738, Ser769, Ser796, and Ser814 each carry the phosphoserine; by PKA modification. A helical transmembrane segment spans residues 860–880 (LILVLIWCLIIFLAEVAASLV). In terms of domain architecture, ABC transmembrane type-1 2 spans 860–1156 (LILVLIWCLI…AVNSSIDVDS (297 aa)). Over 881–919 (VLWLLKNNTPQQEMNSTQSGNRSYPVIITNTSFYYIFYI) the chain is Extracellular. Asn895 and Asn901 each carry an N-linked (GlcNAc...) asparagine glycan. A discontinuously helical transmembrane segment spans residues 920–940 (YVGVADTLLALGLFRGLPLVH). The Cytoplasmic portion of the chain corresponds to 941 to 991 (TLITVSKILHHKMLRSVLQAPMSTLNALKAGGILNRFSKDIAILDDLLPLT). Residues 992–1012 (IFDFIQLLLIVIGAIAVVSVL) traverse the membrane as a helical segment. Residues 1013-1014 (QP) are Extracellular-facing. A helical membrane pass occupies residues 1015 to 1035 (YIFLATVPVIAAFIMLRAYFL). Over 1036–1096 (HTSQQLKQLE…TANWFLYLST (61 aa)) the chain is Cytoplasmic. The chain crosses the membrane as a helical span at residues 1097–1117 (LRWFQMRIEMIFVIFFIAVTF). The Extracellular portion of the chain corresponds to 1118-1131 (ISILTTGEGQGSVG). A helical transmembrane segment spans residues 1132–1152 (IILTLAMNIMSTLQWAVNSSI). At 1153–1481 (DVDSLMRSVS…TEEEVQETRL (329 aa)) the chain is on the cytoplasmic side. The 234-residue stretch at 1211–1444 (MIVKDLTAKY…KSLFRQAISS (234 aa)) folds into the ABC transporter 2 domain. Residues Tyr1220 and 1245–1252 (GRTGSGKS) each bind ATP. Residues 1387–1481 (RTIKQAFADC…TEEEVQETRL (95 aa)) form an interaction with GORASP2 region. Cys1396 carries S-palmitoyl cysteine lipidation. Phosphoserine occurs at positions 1445 and 1457. Over residues 1453-1462 (HRNSSKHKSR) the composition is skewed to basic residues. The segment at 1453-1481 (HRNSSKHKSRSQITALKEETEEEVQETRL) is disordered. The span at 1471-1481 (ETEEEVQETRL) shows a compositional bias: acidic residues. The PDZ-binding motif lies at 1479–1481 (TRL).

The protein belongs to the ABC transporter superfamily. ABCC family. CFTR transporter (TC 3.A.1.202) subfamily. As to quaternary structure, monomer; does not require oligomerization for channel activity. May form oligomers in the membrane. Interacts with SLC26A3, SLC26A6 and NHERF1. Interacts with SHANK2. Interacts with MYO6. Interacts (via C-terminus) with GOPC (via PDZ domain); this promotes CFTR internalization and thereby decreases channel activity. Interacts with SLC4A7 through NHERF1. Found in a complex with MYO5B and RAB11A. Interacts with ANO1. Interacts with SLC26A8. Interacts with AHCYL1; the interaction increases CFTR activity. Interacts with CSE1L. The core-glycosylated form interacts with GORASP2 (via PDZ GRASP-type 1 domain) in respone to ER stress. Interacts with MARCHF2; the interaction leads to CFTR ubiqtuitination and degradation. Interacts with ADGRG2. In terms of processing, N-glycosylated. Post-translationally, phosphorylated; cAMP treatment promotes phosphorylation and activates the channel. Dephosphorylation decreases the ATPase activity (in vitro). Phosphorylation at PKA sites activates the channel. Phosphorylation at PKC sites enhances the response to phosphorylation by PKA. Phosphorylated by AMPK; this inhibits channel activity. Ubiquitinated, leading to its degradation in the lysosome. Deubiquitination by USP10 in early endosomes enhances its endocytic recycling to the cell membrane. Ubiquitinated by RNF185 during ER stress. Ubiquitinated by MARCHF2.

It localises to the apical cell membrane. The protein resides in the early endosome membrane. The protein localises to the cell membrane. It is found in the recycling endosome membrane. Its subcellular location is the endoplasmic reticulum membrane. It localises to the nucleus. The catalysed reaction is ATP + H2O + closed Cl(-) channel = ADP + phosphate + open Cl(-) channel.. The enzyme catalyses chloride(in) = chloride(out). It catalyses the reaction hydrogencarbonate(in) = hydrogencarbonate(out). It carries out the reaction ATP + H2O = ADP + phosphate + H(+). Its function is as follows. Epithelial ion channel that plays an important role in the regulation of epithelial ion and water transport and fluid homeostasis. Mediates the transport of chloride ions across the cell membrane. Possesses an intrinsic ATPase activity and utilizes ATP to gate its channel; the passive flow of anions through the channel is gated by cycles of ATP binding and hydrolysis by the ATP-binding domains. The ion channel is also permeable to HCO(3)(-); selectivity depends on the extracellular chloride concentration. Exerts its function also by modulating the activity of other ion channels and transporters. Contributes to the regulation of the pH and the ion content of the epithelial fluid layer. Modulates the activity of the epithelial sodium channel (ENaC) complex, in part by regulating the cell surface expression of the ENaC complex. May regulate bicarbonate secretion and salvage in epithelial cells by regulating the transporter SLC4A7. Can inhibit the chloride channel activity of ANO1. Plays a role in the chloride and bicarbonate homeostasis during sperm epididymal maturation and capacitation. This chain is Cystic fibrosis transmembrane conductance regulator, found in Cavia porcellus (Guinea pig).